The following is a 393-amino-acid chain: Adaptive-response sensory kinase SasA (393 aa).

A Histidine kinase domain is found at 171-393 (MLAHDLRSPL…CFHFTLPVFR (223 aa)). Phosphohistidine; by autocatalysis is present on H174.

As to quaternary structure, homooligomerizes. Interacts with KaiC. Participates in the KaiABC clock complex, whose core is composed of a KaiC homohexamer, 6 KaiB and up to 6 KaiA dimers. SasA and KaiB(fs) compete to bind to KaiC.

It carries out the reaction ATP + protein L-histidine = ADP + protein N-phospho-L-histidine.. Functionally, member of the two-component regulatory system SasA/RpaA involved in genome-wide circadian gene expression. One of several clock output pathways. Participates in the Kai clock protein complex, the main circadian regulator in cyanobacteria, via its interaction with KaiC. KaiC enhances the autophosphorylation activity of SasA, which then transfers its phosphate group to RpaA to activate it. In addition to its output function, recruits fold-shifted KaiB (KaiB(fs)) to KaiC to cooperatively form the KaiB(6):KaiC(6) complex (independent of SasA kinase activity). Required for robustness of the circadian rhythm of gene expression and is involved in clock output, also required for adaptation to light/dark cycles. This chain is Adaptive-response sensory kinase SasA, found in Gloeothece citriformis (strain PCC 7424) (Cyanothece sp. (strain PCC 7424)).